The chain runs to 409 residues: O-methyltransferase pyiA (409 aa).

Positions 1-21 (MASQDGTTELLSQSVNSTCIP) are enriched in polar residues. The interval 1 to 46 (MASQDGTTELLSQSVNSTCIPGSTYHVDRGRASSASTPPTSPPLSE) is disordered. Asp-271 is an S-adenosyl-L-methionine binding site. His-317 (proton acceptor) is an active-site residue.

Belongs to the class I-like SAM-binding methyltransferase superfamily. Cation-independent O-methyltransferase family.

Its pathway is mycotoxin biosynthesis. Functionally, O-methyltransferase; part of the gene cluster that mediates the biosynthesis of the mycotoxin pyrichalasin H, a tyrosine-derived cytochalasan that inhibits the growth of rice seedlings, but also inhibits lymphocyte capping and actin polymerization and alters cell morphology. Pyrichalasin H is indicated as the responsible agent for the genus-specific pathogenicity of M.grisea toward crabgrass. The first step in the pathway is catalyzed by the O-methyltransferase pyiA which methylates free tyrosine to generate the precursor O-methyltyrosine. The hybrid PKS-NRPS pyiS, assisted by the enoyl reductase pyiC, are responsible for fusion of the O-methyltyrosine precursor and the polyketide backbone. The polyketide synthase module (PKS) of pyiS is responsible for the synthesis of the polyketide backbone and the downstream nonribosomal peptide synthetase (NRPS) amidates the carboxyl end of the polyketide with the O-methyltyrosine precursor. As the NRPS A-domain demonstrates substrate tolerance, pyiS can also use phenylalanine, tyrosine and even para-chlorophenylalanine as amino acid precursor, which leads to the production of novel cytochalasans, including halogenated cytochalasans. Because pyiS lacks a designated enoylreductase (ER) domain, the required activity is provided the enoyl reductase pyiC. Reduction by the hydrolyase pyiE leads to 1,5-dihydropyrrolone, which is substrate for dehydration and intra-molecular Diels-Alder cyclization by the Diels-Alderase pyiF to yield the required isoindolone-fused macrocycle. The tailoring cytochrome P450 monooxygenases piyD and piyG catalyze the hydroxylation at C-18 and C-7, respectivily, whereas the short-chain dehydrogenase/reductase pyiH reduces the carbonyl at C-21 in preparation for the transfer of an acetyl group by the acetyltransferase pyiB. These 3 reactions whose order is not clear yet, lead to the production of O-methylpyrichalasin J, a deacetylated pyrichalasin H. Finally, pyiB to converts O-methylpyrichalasin J into the final product pyrichalasin H via acetylation of C-21. In Pyricularia grisea (Crabgrass-specific blast fungus), this protein is O-methyltransferase pyiA.